A 175-amino-acid polypeptide reads, in one-letter code: Sec-independent protein translocase protein TatB (175 aa).

A helical membrane pass occupies residues 1–21 (MLDLGLSKMALIGVVALVVLG). Residues 96 to 115 (VSPGGSAAADAPDGPSAASG) show a composition bias toward low complexity. Disordered regions lie at residues 96–119 (VSPGGSAAADAPDGPSAASGEPSW) and 152–175 (QVQSGAARVARHRPASLRRPARFL). Basic residues predominate over residues 160-175 (VARHRPASLRRPARFL).

Belongs to the TatB family. In terms of assembly, the Tat system comprises two distinct complexes: a TatABC complex, containing multiple copies of TatA, TatB and TatC subunits, and a separate TatA complex, containing only TatA subunits. Substrates initially bind to the TatABC complex, which probably triggers association of the separate TatA complex to form the active translocon.

Its subcellular location is the cell inner membrane. Its function is as follows. Part of the twin-arginine translocation (Tat) system that transports large folded proteins containing a characteristic twin-arginine motif in their signal peptide across membranes. Together with TatC, TatB is part of a receptor directly interacting with Tat signal peptides. TatB may form an oligomeric binding site that transiently accommodates folded Tat precursor proteins before their translocation. The protein is Sec-independent protein translocase protein TatB of Burkholderia pseudomallei (strain 1710b).